The chain runs to 917 residues: Protein translocase subunit SecA (917 aa).

ATP-binding positions include glutamine 87, 105–109 (GEGKT), and aspartate 516. Zn(2+) contacts are provided by cysteine 901, cysteine 903, cysteine 912, and histidine 913.

The protein belongs to the SecA family. Monomer and homodimer. Part of the essential Sec protein translocation apparatus which comprises SecA, SecYEG and auxiliary proteins SecDF-YajC and YidC. Requires Zn(2+) as cofactor.

Its subcellular location is the cell inner membrane. The protein resides in the cytoplasm. It carries out the reaction ATP + H2O + cellular proteinSide 1 = ADP + phosphate + cellular proteinSide 2.. In terms of biological role, part of the Sec protein translocase complex. Interacts with the SecYEG preprotein conducting channel. Has a central role in coupling the hydrolysis of ATP to the transfer of proteins into and across the cell membrane, serving both as a receptor for the preprotein-SecB complex and as an ATP-driven molecular motor driving the stepwise translocation of polypeptide chains across the membrane. In Verminephrobacter eiseniae (strain EF01-2), this protein is Protein translocase subunit SecA.